Consider the following 872-residue polypeptide: Alanine--tRNA ligase (872 aa).

The Zn(2+) site is built by His567, His571, Cys669, and His673.

The protein belongs to the class-II aminoacyl-tRNA synthetase family. Zn(2+) serves as cofactor.

Its subcellular location is the cytoplasm. The enzyme catalyses tRNA(Ala) + L-alanine + ATP = L-alanyl-tRNA(Ala) + AMP + diphosphate. Its function is as follows. Catalyzes the attachment of alanine to tRNA(Ala) in a two-step reaction: alanine is first activated by ATP to form Ala-AMP and then transferred to the acceptor end of tRNA(Ala). Also edits incorrectly charged Ser-tRNA(Ala) and Gly-tRNA(Ala) via its editing domain. The chain is Alanine--tRNA ligase from Streptococcus mutans serotype c (strain ATCC 700610 / UA159).